The following is an 818-amino-acid chain: Serine/threonine-protein kinase PTK2/STK2 (818 aa).

A compositionally biased stretch (polar residues) spans 28-39; that stretch reads NSSSHTDNSSLL. 2 disordered regions span residues 28–100 and 117–177; these read NSSS…GSVS and NPYL…SHHF. Thr56 carries the phosphothreonine modification. Over residues 57–81 the composition is skewed to low complexity; that stretch reads SPSISGSGSGGNSPSSSAGARQRSA. Ser59 and Ser80 each carry phosphoserine. Basic and acidic residues predominate over residues 136–160; the sequence is TRDRDRAVLDREKEKERARNKERNT. The Protein kinase domain maps to 255–562; sequence DTDNKPIGSG…MDDLFNDPFF (308 aa). ATP contacts are provided by residues 261-269 and Lys285; that span reads IGSGGSSEV. Asp388 (proton acceptor) is an active-site residue. Residues 585-595 show a composition bias toward polar residues; the sequence is STSTNDFSENS. The disordered stretch occupies residues 585 to 795; sequence STSTNDFSEN…SVSSSKKKKV (211 aa). A phosphoserine mark is found at Ser623 and Ser632. Composition is skewed to basic and acidic residues over residues 638–651 and 659–685; these read KVKDSAKTKTHDVG and TKPKQQDKKENLKKDEVKNGDKDKVIE. Ser694 bears the Phosphoserine mark. Thr700 is modified (phosphothreonine). At Ser711 the chain carries Phosphoserine. Low complexity predominate over residues 727–736; sequence TPTTPTHNGP. Position 737 is a phosphothreonine (Thr737). Phosphoserine is present on residues Ser752, Ser755, Ser778, and Ser781. Residues 755–767 show a composition bias toward polar residues; that stretch reads SLKSETPASTKNF. Residues 768-789 are compositionally biased toward low complexity; that stretch reads SAPNVSSSSNSLRSLGSPSVSS.

Belongs to the protein kinase superfamily. Ser/Thr protein kinase family.

Its subcellular location is the nucleus. It is found in the cytoplasm. The catalysed reaction is L-seryl-[protein] + ATP = O-phospho-L-seryl-[protein] + ADP + H(+). It carries out the reaction L-threonyl-[protein] + ATP = O-phospho-L-threonyl-[protein] + ADP + H(+). Essential determinant for high-affinity spermidine transport. Required for the activation of the plasma membrane proton pump PMA1 via phosphorylation of 'Ser-899'. The protein is Serine/threonine-protein kinase PTK2/STK2 (PTK2) of Saccharomyces cerevisiae (strain ATCC 204508 / S288c) (Baker's yeast).